The sequence spans 184 residues: Photosystem I assembly protein Ycf4 (184 aa).

The next 2 helical transmembrane spans lie at 19–39 and 57–77; these read ISNF…LLVG and IIFF…LFIS.

This sequence belongs to the Ycf4 family.

Its subcellular location is the plastid. It localises to the chloroplast thylakoid membrane. Its function is as follows. Seems to be required for the assembly of the photosystem I complex. The polypeptide is Photosystem I assembly protein Ycf4 (Nicotiana sylvestris (Wood tobacco)).